The sequence spans 163 residues: Large ribosomal subunit protein uL10 (163 aa).

This sequence belongs to the universal ribosomal protein uL10 family. In terms of assembly, part of the ribosomal stalk of the 50S ribosomal subunit. The N-terminus interacts with L11 and the large rRNA to form the base of the stalk. The C-terminus forms an elongated spine to which L12 dimers bind in a sequential fashion forming a multimeric L10(L12)X complex.

Forms part of the ribosomal stalk, playing a central role in the interaction of the ribosome with GTP-bound translation factors. The chain is Large ribosomal subunit protein uL10 (rplJ) from Haemophilus influenzae (strain ATCC 51907 / DSM 11121 / KW20 / Rd).